Reading from the N-terminus, the 553-residue chain is Dihydroxy-acid dehydratase (553 aa).

Position 78 (aspartate 78) interacts with Mg(2+). Cysteine 119 lines the [2Fe-2S] cluster pocket. Aspartate 120 and lysine 121 together coordinate Mg(2+). At lysine 121 the chain carries N6-carboxylysine. Residue cysteine 193 participates in [2Fe-2S] cluster binding. Glutamate 441 contacts Mg(2+). Serine 467 acts as the Proton acceptor in catalysis.

Belongs to the IlvD/Edd family. As to quaternary structure, homodimer. Requires [2Fe-2S] cluster as cofactor. Mg(2+) serves as cofactor.

It catalyses the reaction (2R)-2,3-dihydroxy-3-methylbutanoate = 3-methyl-2-oxobutanoate + H2O. The enzyme catalyses (2R,3R)-2,3-dihydroxy-3-methylpentanoate = (S)-3-methyl-2-oxopentanoate + H2O. Its pathway is amino-acid biosynthesis; L-isoleucine biosynthesis; L-isoleucine from 2-oxobutanoate: step 3/4. The protein operates within amino-acid biosynthesis; L-valine biosynthesis; L-valine from pyruvate: step 3/4. Its function is as follows. Functions in the biosynthesis of branched-chain amino acids. Catalyzes the dehydration of (2R,3R)-2,3-dihydroxy-3-methylpentanoate (2,3-dihydroxy-3-methylvalerate) into 2-oxo-3-methylpentanoate (2-oxo-3-methylvalerate) and of (2R)-2,3-dihydroxy-3-methylbutanoate (2,3-dihydroxyisovalerate) into 2-oxo-3-methylbutanoate (2-oxoisovalerate), the penultimate precursor to L-isoleucine and L-valine, respectively. This Geobacter sp. (strain M21) protein is Dihydroxy-acid dehydratase.